The following is a 434-amino-acid chain: Nicotinate phosphoribosyltransferase (434 aa).

A Phosphohistidine; by autocatalysis modification is found at His-242.

This sequence belongs to the NAPRTase family. Post-translationally, transiently phosphorylated on a His residue during the reaction cycle. Phosphorylation strongly increases the affinity for substrates and increases the rate of nicotinate D-ribonucleotide production. Dephosphorylation regenerates the low-affinity form of the enzyme, leading to product release.

It catalyses the reaction nicotinate + 5-phospho-alpha-D-ribose 1-diphosphate + ATP + H2O = nicotinate beta-D-ribonucleotide + ADP + phosphate + diphosphate. It functions in the pathway cofactor biosynthesis; NAD(+) biosynthesis; nicotinate D-ribonucleotide from nicotinate: step 1/1. Catalyzes the synthesis of beta-nicotinate D-ribonucleotide from nicotinate and 5-phospho-D-ribose 1-phosphate at the expense of ATP. The chain is Nicotinate phosphoribosyltransferase from Brucella canis (strain ATCC 23365 / NCTC 10854 / RM-666).